Consider the following 366-residue polypeptide: Anthranilate phosphoribosyltransferase (366 aa).

5-phospho-alpha-D-ribose 1-diphosphate is bound by residues glycine 79, 82-83 (GD), threonine 87, 89-92 (NIST), 107-115 (KHGNRAATS), and serine 119. Glycine 79 lines the anthranilate pocket. Mg(2+) is bound at residue serine 91. Asparagine 110 provides a ligand contact to anthranilate. Arginine 165 provides a ligand contact to anthranilate. Positions 223 and 224 each coordinate Mg(2+). A disordered region spans residues 342 to 366 (ESLSGKSMSMRSRTSILSPASGERV). The span at 345–359 (SGKSMSMRSRTSILS) shows a compositional bias: polar residues.

Belongs to the anthranilate phosphoribosyltransferase family. In terms of assembly, homodimer. Requires Mg(2+) as cofactor.

It catalyses the reaction N-(5-phospho-beta-D-ribosyl)anthranilate + diphosphate = 5-phospho-alpha-D-ribose 1-diphosphate + anthranilate. It participates in amino-acid biosynthesis; L-tryptophan biosynthesis; L-tryptophan from chorismate: step 2/5. Its function is as follows. Catalyzes the transfer of the phosphoribosyl group of 5-phosphorylribose-1-pyrophosphate (PRPP) to anthranilate to yield N-(5'-phosphoribosyl)-anthranilate (PRA). The protein is Anthranilate phosphoribosyltransferase of Methanosarcina barkeri (strain Fusaro / DSM 804).